Reading from the N-terminus, the 586-residue chain is Arginine--tRNA ligase (586 aa).

The 'HIGH' region signature appears at A133–S143.

This sequence belongs to the class-I aminoacyl-tRNA synthetase family. Monomer.

Its subcellular location is the cytoplasm. It carries out the reaction tRNA(Arg) + L-arginine + ATP = L-arginyl-tRNA(Arg) + AMP + diphosphate. The chain is Arginine--tRNA ligase from Leptospira borgpetersenii serovar Hardjo-bovis (strain JB197).